The primary structure comprises 328 residues: Tetraacyldisaccharide 4'-kinase (328 aa).

55–62 contacts ATP; the sequence is TAGGNGKT.

The protein belongs to the LpxK family.

It carries out the reaction a lipid A disaccharide + ATP = a lipid IVA + ADP + H(+). The protein operates within glycolipid biosynthesis; lipid IV(A) biosynthesis; lipid IV(A) from (3R)-3-hydroxytetradecanoyl-[acyl-carrier-protein] and UDP-N-acetyl-alpha-D-glucosamine: step 6/6. Its function is as follows. Transfers the gamma-phosphate of ATP to the 4'-position of a tetraacyldisaccharide 1-phosphate intermediate (termed DS-1-P) to form tetraacyldisaccharide 1,4'-bis-phosphate (lipid IVA). The sequence is that of Tetraacyldisaccharide 4'-kinase from Escherichia coli (strain K12 / MC4100 / BW2952).